The sequence spans 430 residues: tRNA pseudouridine synthase Pus10 (430 aa).

Residue aspartate 253 is the Nucleophile of the active site. Residues tyrosine 320 and tyrosine 392 each coordinate substrate.

This sequence belongs to the pseudouridine synthase Pus10 family.

It carries out the reaction uridine(54) in tRNA = pseudouridine(54) in tRNA. The catalysed reaction is uridine(55) in tRNA = pseudouridine(55) in tRNA. In terms of biological role, responsible for synthesis of pseudouridine from uracil-54 and uracil-55 in the psi GC loop of transfer RNAs. The protein is tRNA pseudouridine synthase Pus10 of Ignisphaera aggregans (strain DSM 17230 / JCM 13409 / AQ1.S1).